Reading from the N-terminus, the 72-residue chain is Heat-stable enterotoxin A2 (72 aa).

The first 19 residues, 1–19, serve as a signal peptide directing secretion; sequence MKKSILFIFLSVLSFSPFA. Positions 20–53 are excised as a propeptide; that stretch reads QDAKPAGSSKEKITLESKKCNIVKKNNESSPESM. 3 cysteine pairs are disulfide-bonded: Cys-59–Cys-64, Cys-60–Cys-68, and Cys-63–Cys-71.

It belongs to the heat-stable enterotoxin family.

The protein localises to the secreted. In terms of biological role, toxin which activates the particulate form of guanylate cyclase and increases cyclic GMP levels within the host intestinal epithelial cells. The sequence is that of Heat-stable enterotoxin A2 (sta2) from Escherichia coli.